A 583-amino-acid chain; its full sequence is Inactive tyrosine-protein kinase RYK (583 aa).

The first 18 residues, 1–18, serve as a signal peptide directing secretion; it reads MILRYLIFFAQLWALCLA. Residues 19-173 are Extracellular-facing; that stretch reads NVNMFISKEE…EVDDTDSIDK (155 aa). Positions 22–147 constitute a WIF domain; the sequence is MFISKEEMNR…KVKLRQEKIC (126 aa). N30 and N46 each carry an N-linked (GlcNAc...) asparagine glycan. A disulfide bond links C113 and C147. A helical transmembrane segment spans residues 174-194; that stretch reads AFFVIICIAAAFLLIVAATLI. Over 195-583 the chain is Cytoplasmic; it reads CYFKRSKKED…DFNIQLSQYI (389 aa). The Protein kinase domain maps to 281 to 583; the sequence is FQSLPLDMEG…DFNIQLSQYI (303 aa). ATP is bound by residues 287–295 and K327; that span reads DMEGTFGEV.

This sequence belongs to the protein kinase superfamily. Tyr protein kinase family.

It localises to the cell membrane. It is found in the basolateral cell membrane. In terms of biological role, has no detectable kinase activity in vitro and is unlikely to function as a tyrosine kinase in vivo. Receptor which may act as a receptor for Wnt ligand mom-2. Plays a role in controlling P7.p vulva precursor cell lineage orientation during vulva development. Regulates pop-1 asymmetric distribution in P7.p and its daughter cells. Plays a role in the migration of ALM neurons during embryogenesis. The polypeptide is Inactive tyrosine-protein kinase RYK (Caenorhabditis elegans).